The sequence spans 144 residues: Putative pre-16S rRNA nuclease (144 aa).

The protein belongs to the YqgF nuclease family.

The protein localises to the cytoplasm. Could be a nuclease involved in processing of the 5'-end of pre-16S rRNA. This is Putative pre-16S rRNA nuclease from Lactiplantibacillus plantarum (strain ATCC BAA-793 / NCIMB 8826 / WCFS1) (Lactobacillus plantarum).